Here is a 336-residue protein sequence, read N- to C-terminus: Inositol 2-dehydrogenase (336 aa).

The protein belongs to the Gfo/Idh/MocA family. As to quaternary structure, homotetramer.

It catalyses the reaction myo-inositol + NAD(+) = scyllo-inosose + NADH + H(+). Its function is as follows. Involved in the oxidation of myo-inositol (MI) to 2-keto-myo-inositol (2KMI or 2-inosose). This is Inositol 2-dehydrogenase from Pseudomonas syringae pv. syringae (strain B728a).